Reading from the N-terminus, the 546-residue chain is uncharacterized protein (546 aa).

The region spanning 52–123 (SVAELRDVQP…NTIEQLLQEN (72 aa)) is the SLH domain.

This sequence belongs to the OprB family.

This is an uncharacterized protein from Synechocystis sp. (strain ATCC 27184 / PCC 6803 / Kazusa).